The following is a 93-amino-acid chain: YcgL domain-containing protein AHA_2135 (93 aa).

Residues 1–85 (MLCAVYKSRK…PPENLLEQHK (85 aa)) form the YcgL domain.

This chain is YcgL domain-containing protein AHA_2135, found in Aeromonas hydrophila subsp. hydrophila (strain ATCC 7966 / DSM 30187 / BCRC 13018 / CCUG 14551 / JCM 1027 / KCTC 2358 / NCIMB 9240 / NCTC 8049).